Reading from the N-terminus, the 580-residue chain is Proline--tRNA ligase (580 aa).

It belongs to the class-II aminoacyl-tRNA synthetase family. ProS type 1 subfamily. In terms of assembly, homodimer.

It localises to the cytoplasm. It carries out the reaction tRNA(Pro) + L-proline + ATP = L-prolyl-tRNA(Pro) + AMP + diphosphate. Its function is as follows. Catalyzes the attachment of proline to tRNA(Pro) in a two-step reaction: proline is first activated by ATP to form Pro-AMP and then transferred to the acceptor end of tRNA(Pro). As ProRS can inadvertently accommodate and process non-cognate amino acids such as alanine and cysteine, to avoid such errors it has two additional distinct editing activities against alanine. One activity is designated as 'pretransfer' editing and involves the tRNA(Pro)-independent hydrolysis of activated Ala-AMP. The other activity is designated 'posttransfer' editing and involves deacylation of mischarged Ala-tRNA(Pro). The misacylated Cys-tRNA(Pro) is not edited by ProRS. This chain is Proline--tRNA ligase, found in Maridesulfovibrio salexigens (strain ATCC 14822 / DSM 2638 / NCIMB 8403 / VKM B-1763) (Desulfovibrio salexigens).